We begin with the raw amino-acid sequence, 161 residues long: Anther-specific protein LAT52 (161 aa).

Residues 1–17 (MAKAIVLLSALCILALA) form the signal peptide. 3 cysteine pairs are disulfide-bonded: C35–C106, C38–C147, and C59–C94. A glycan (N-linked (GlcNAc...) asparagine) is linked at N61.

The protein belongs to the Ole e I family. In terms of tissue distribution, expressed in anthers and pollen.

Its function is as follows. May play a role during germination or early tube growth. The chain is Anther-specific protein LAT52 (LAT52) from Solanum lycopersicum (Tomato).